A 192-amino-acid chain; its full sequence is Transcription termination/antitermination protein NusG (192 aa).

One can recognise a KOW domain in the interval 140–168; that stretch reads VGEIVIVTDGPFETFTGTVEEIDQEKNRL.

Belongs to the NusG family.

Participates in transcription elongation, termination and antitermination. The polypeptide is Transcription termination/antitermination protein NusG (Rickettsia felis (strain ATCC VR-1525 / URRWXCal2) (Rickettsia azadi)).